Reading from the N-terminus, the 403-residue chain is Alkaline protease 1 (403 aa).

The first 21 residues, 1-21 (MLSIKRTLLLLGAVLPAVFGA), serve as a signal peptide directing secretion. A propeptide spanning residues 22–125 (PVQETRRAAQ…QIWYLDALTT (104 aa)) is cleaved from the precursor. Residues 36 to 120 (KYIVTFKPGT…HVEEDQIWYL (85 aa)) form the Inhibitor I9 domain. The Peptidase S8 domain occupies 130–403 (PWGLGSISHK…PNKLAYNGNA (274 aa)). Active-site charge relay system residues include Asp-162 and His-193. Asn-253 and Asn-307 each carry an N-linked (GlcNAc...) asparagine glycan. The active-site Charge relay system is Ser-349. N-linked (GlcNAc...) asparagine glycosylation is present at Asn-367.

The protein belongs to the peptidase S8 family.

It localises to the secreted. It carries out the reaction Hydrolysis of proteins with broad specificity, and of Bz-Arg-OEt &gt; Ac-Tyr-OEt. Does not hydrolyze peptide amides.. Its function is as follows. Secreted alkaline protease that allows assimilation of proteinaceous substrates. Acts as a significant virulence factor in invasive aspergillosis. Involved in immune evasion from the human and mice complement systems during infection. Efficiently cleaves important components of the complement cascade such as such as C3, C4, C5, and C1q, as well as IgG, which leads to down-regulation of complement activation at the hyphal surface. This chain is Alkaline protease 1 (alp1), found in Aspergillus fumigatus (strain CBS 144.89 / FGSC A1163 / CEA10) (Neosartorya fumigata).